A 125-amino-acid polypeptide reads, in one-letter code: Small ribosomal subunit protein uS13 (125 aa).

The interval 97–125 (PLRGQRTKTNARTRKGKRKTVANKKMASK) is disordered.

This sequence belongs to the universal ribosomal protein uS13 family. As to quaternary structure, part of the 30S ribosomal subunit. Forms a loose heterodimer with protein S19. Forms two bridges to the 50S subunit in the 70S ribosome.

In terms of biological role, located at the top of the head of the 30S subunit, it contacts several helices of the 16S rRNA. In the 70S ribosome it contacts the 23S rRNA (bridge B1a) and protein L5 of the 50S subunit (bridge B1b), connecting the 2 subunits; these bridges are implicated in subunit movement. Contacts the tRNAs in the A and P-sites. The protein is Small ribosomal subunit protein uS13 of Borrelia hermsii (strain HS1 / DAH).